Consider the following 503-residue polypeptide: Galactose/methyl galactoside import ATP-binding protein MglA 2 (503 aa).

ABC transporter domains follow at residues 11-246 (LEMT…VGRE) and 257-503 (TPKE…SRYL). 43-50 (GENGAGKS) contacts ATP.

This sequence belongs to the ABC transporter superfamily. Galactose/methyl galactoside importer (TC 3.A.1.2.3) family. The complex is composed of one ATP-binding protein (MglA), two transmembrane proteins (MglC) and a solute-binding protein (MglB).

It localises to the cell inner membrane. It carries out the reaction D-galactose(out) + ATP + H2O = D-galactose(in) + ADP + phosphate + H(+). The catalysed reaction is methyl beta-D-galactoside(out) + ATP + H2O = methyl beta-D-galactoside(in) + ADP + phosphate + H(+). Functionally, part of the ABC transporter complex MglABC involved in galactose/methyl galactoside import. Responsible for energy coupling to the transport system. This Photobacterium profundum (strain SS9) protein is Galactose/methyl galactoside import ATP-binding protein MglA 2.